Reading from the N-terminus, the 156-residue chain is Guanine deaminase (156 aa).

The 132-residue stretch at 1–132 (MNHETFLKRA…KPAEERTIPF (132 aa)) folds into the CMP/dCMP-type deaminase domain. A Zn(2+)-binding site is contributed by H53. E55 serves as the catalytic Proton donor. Positions 83 and 86 each coordinate Zn(2+).

This sequence belongs to the cytidine and deoxycytidylate deaminase family. The cofactor is Zn(2+).

It catalyses the reaction guanine + H2O + H(+) = xanthine + NH4(+). Its pathway is purine metabolism; guanine degradation; xanthine from guanine: step 1/1. In terms of biological role, catalyzes the hydrolytic deamination of guanine, producing xanthine and ammonia. This chain is Guanine deaminase (guaD), found in Bacillus subtilis (strain 168).